The primary structure comprises 102 residues: Small ribosomal subunit protein eS24 (102 aa).

The protein belongs to the eukaryotic ribosomal protein eS24 family.

This is Small ribosomal subunit protein eS24 from Methanococcoides burtonii (strain DSM 6242 / NBRC 107633 / OCM 468 / ACE-M).